An 82-amino-acid polypeptide reads, in one-letter code: MIKLRLKRFGKKRAASYRIVAMNSRDRRDGRPLEELGYYNPMTDETNLRVEPLVKRLKEGAQPTDTVRRILEKANIFEQVRA.

Belongs to the bacterial ribosomal protein bS16 family.

This Cyanothece sp. (strain PCC 7425 / ATCC 29141) protein is Small ribosomal subunit protein bS16.